A 118-amino-acid polypeptide reads, in one-letter code: Ribonuclease P protein component (118 aa).

It belongs to the RnpA family. In terms of assembly, consists of a catalytic RNA component (M1 or rnpB) and a protein subunit.

It catalyses the reaction Endonucleolytic cleavage of RNA, removing 5'-extranucleotides from tRNA precursor.. Functionally, RNaseP catalyzes the removal of the 5'-leader sequence from pre-tRNA to produce the mature 5'-terminus. It can also cleave other RNA substrates such as 4.5S RNA. The protein component plays an auxiliary but essential role in vivo by binding to the 5'-leader sequence and broadening the substrate specificity of the ribozyme. This Enterococcus faecalis (strain ATCC 700802 / V583) protein is Ribonuclease P protein component.